Reading from the N-terminus, the 373-residue chain is tRNA-specific 2-thiouridylase MnmA (373 aa).

ATP contacts are provided by residues 12–19 (GMSGGVDS) and Met-38. The interval 98 to 100 (NPD) is interaction with target base in tRNA. The active-site Nucleophile is the Cys-103. An intrachain disulfide couples Cys-103 to Cys-200. ATP is bound at residue Gly-127. Residues 150–152 (KDQ) form an interaction with tRNA region. Cys-200 (cysteine persulfide intermediate) is an active-site residue. An interaction with tRNA region spans residues 312–313 (RY).

The protein belongs to the MnmA/TRMU family.

The protein resides in the cytoplasm. The enzyme catalyses S-sulfanyl-L-cysteinyl-[protein] + uridine(34) in tRNA + AH2 + ATP = 2-thiouridine(34) in tRNA + L-cysteinyl-[protein] + A + AMP + diphosphate + H(+). Its function is as follows. Catalyzes the 2-thiolation of uridine at the wobble position (U34) of tRNA, leading to the formation of s(2)U34. This is tRNA-specific 2-thiouridylase MnmA from Streptococcus pneumoniae (strain CGSP14).